The sequence spans 343 residues: Twinfilin (343 aa).

ADF-H domains are found at residues Glu11–Arg135 and Glu184–His312. The interval Arg319–Asp343 is disordered.

It belongs to the actin-binding proteins ADF family. Twinfilin subfamily. As to quaternary structure, interacts with G-actin; ADP-actin form.

It is found in the cytoplasm. The protein resides in the cytoskeleton. It localises to the cell cortex. Functionally, actin-binding protein involved in motile and morphological processes. Inhibits actin polymerization, likely by sequestering G-actin. This chain is Twinfilin (twf), found in Drosophila melanogaster (Fruit fly).